A 248-amino-acid polypeptide reads, in one-letter code: Small ribosomal subunit protein uS2 (248 aa).

Belongs to the universal ribosomal protein uS2 family.

This chain is Small ribosomal subunit protein uS2, found in Leptothrix cholodnii (strain ATCC 51168 / LMG 8142 / SP-6) (Leptothrix discophora (strain SP-6)).